Reading from the N-terminus, the 40-residue chain is MADTTGRIPLWIIGTVTGIIVIGLIGIFFYGSYSGLGSSL.

A helical membrane pass occupies residues 8–28; that stretch reads IPLWIIGTVTGIIVIGLIGIF.

This sequence belongs to the PsbJ family. PSII is composed of 1 copy each of membrane proteins PsbA, PsbB, PsbC, PsbD, PsbE, PsbF, PsbH, PsbI, PsbJ, PsbK, PsbL, PsbM, PsbT, PsbX, PsbY, PsbZ, Psb30/Ycf12, at least 3 peripheral proteins of the oxygen-evolving complex and a large number of cofactors. It forms dimeric complexes.

Its subcellular location is the plastid. The protein localises to the chloroplast thylakoid membrane. One of the components of the core complex of photosystem II (PSII). PSII is a light-driven water:plastoquinone oxidoreductase that uses light energy to abstract electrons from H(2)O, generating O(2) and a proton gradient subsequently used for ATP formation. It consists of a core antenna complex that captures photons, and an electron transfer chain that converts photonic excitation into a charge separation. This chain is Photosystem II reaction center protein J, found in Morus indica (Mulberry).